The chain runs to 261 residues: Triosephosphate isomerase (261 aa).

Residue 10-12 participates in substrate binding; sequence NWK. H100 acts as the Electrophile in catalysis. E172 acts as the Proton acceptor in catalysis. Residues G178, S218, and 239-240 each bind substrate; that span reads GG.

It belongs to the triosephosphate isomerase family. As to quaternary structure, homodimer.

It localises to the cytoplasm. It catalyses the reaction D-glyceraldehyde 3-phosphate = dihydroxyacetone phosphate. The protein operates within carbohydrate biosynthesis; gluconeogenesis. It participates in carbohydrate degradation; glycolysis; D-glyceraldehyde 3-phosphate from glycerone phosphate: step 1/1. In terms of biological role, involved in the gluconeogenesis. Catalyzes stereospecifically the conversion of dihydroxyacetone phosphate (DHAP) to D-glyceraldehyde-3-phosphate (G3P). This is Triosephosphate isomerase from Mycobacterium marinum (strain ATCC BAA-535 / M).